The chain runs to 99 residues: Small ribosomal subunit protein uS14 (99 aa).

The protein belongs to the universal ribosomal protein uS14 family. As to quaternary structure, part of the 30S ribosomal subunit. Contacts proteins S3 and S10.

Its function is as follows. Binds 16S rRNA, required for the assembly of 30S particles and may also be responsible for determining the conformation of the 16S rRNA at the A site. The chain is Small ribosomal subunit protein uS14 from Bacteroides fragilis (strain ATCC 25285 / DSM 2151 / CCUG 4856 / JCM 11019 / LMG 10263 / NCTC 9343 / Onslow / VPI 2553 / EN-2).